The chain runs to 384 residues: Anhydro-N-acetylmuramic acid kinase (384 aa).

Position 9 to 16 (9 to 16 (GTSVDGID)) interacts with ATP.

This sequence belongs to the anhydro-N-acetylmuramic acid kinase family.

It carries out the reaction 1,6-anhydro-N-acetyl-beta-muramate + ATP + H2O = N-acetyl-D-muramate 6-phosphate + ADP + H(+). It participates in amino-sugar metabolism; 1,6-anhydro-N-acetylmuramate degradation. Its pathway is cell wall biogenesis; peptidoglycan recycling. Catalyzes the specific phosphorylation of 1,6-anhydro-N-acetylmuramic acid (anhMurNAc) with the simultaneous cleavage of the 1,6-anhydro ring, generating MurNAc-6-P. Is required for the utilization of anhMurNAc either imported from the medium or derived from its own cell wall murein, and thus plays a role in cell wall recycling. The protein is Anhydro-N-acetylmuramic acid kinase of Rippkaea orientalis (strain PCC 8801 / RF-1) (Cyanothece sp. (strain PCC 8801)).